We begin with the raw amino-acid sequence, 328 residues long: MSFRREKFIEFGGPDGGNGGNGGSVIFVASSAVNTLLYFRYNQHIRAENGKAGSGKGKFGAAGRNRVVEVPVGTQLYDEDGNTLIADLNNIGQQYTVAAGGRGGIGNAQYKSSTNRAPTYFTYGTLGEEHCVLLKLKIVSDVGIIGMPNAGKSSLLSRCTASKTKVSDYPFTTLEPHLGVAYANGCELVLADIPGLIENASSGAGLGHKFLKHIERCVILLHLVDCSLPDIVSAYELVRQELKLHSQELAGKQEVVILNKCDLLSEGEVREKQKLLESSTKKEVITLSMGDELDSLIVFLHAQVKKAVVTEPSDTSFDPFLYVHYNKK.

The Obg domain occupies M1–V139. An OBG-type G domain is found at S140–V309. GTP-binding positions include G146–S153, F171–E175, D192–G195, N259–D262, and G290–E292. 2 residues coordinate Mg(2+): S153 and T173.

This sequence belongs to the TRAFAC class OBG-HflX-like GTPase superfamily. OBG GTPase family. As to quaternary structure, monomer. Requires Mg(2+) as cofactor.

It is found in the cytoplasm. An essential GTPase which binds GTP, GDP and possibly (p)ppGpp with moderate affinity, with high nucleotide exchange rates and a fairly low GTP hydrolysis rate. Plays a role in control of the cell cycle, stress response, ribosome biogenesis and in those bacteria that undergo differentiation, in morphogenesis control. In Anaplasma marginale (strain St. Maries), this protein is GTPase Obg 2.